A 163-amino-acid polypeptide reads, in one-letter code: Ankyrin repeat domain-containing protein 37 (163 aa).

3 ANK repeats span residues 29–58 (LGQSPAHLAACGGQAFFLLWQLQTGVDVNQ), 62–91 (FGEAPIHKAARSGSMECLSLLIASDARIDM), and 95–124 (DGHTAEDVALSCGFLDCARYLATIKLTQDT). The Nuclear localization signal signature appears at 129 to 149 (QSSLHNLKETAAGVKRGQCCQ).

The protein localises to the nucleus. It is found in the cytoplasm. This chain is Ankyrin repeat domain-containing protein 37 (ankrd37), found in Xenopus tropicalis (Western clawed frog).